Reading from the N-terminus, the 363-residue chain is Spermatogenesis-associated protein 22 (363 aa).

Composition is skewed to polar residues over residues 1 to 12, 30 to 48, 98 to 108, and 140 to 157; these read MKRSLNENSARS, QPLTSNPLKDDSGISTPSD, IQSNTGRSQGG, and NDGKNSCPVSSGAQQQKQ. Disordered regions lie at residues 1 to 51, 98 to 127, and 140 to 170; these read MKRS…DNYD, IQSNTGRSQGGWSYRDGNKNTSLKTWNKND, and NDGKNSCPVSSGAQQQKQLRIPEPPNLSRNK.

In terms of assembly, component of a multiprotein complex with MEIOB and RPA2. Interacts with MEIOB. Interacts with the complex BRME1:HSF2BP:BRCA2. In terms of tissue distribution, highly expressed in adult testis.

It is found in the chromosome. Meiosis-specific protein required for homologous recombination in meiosis I. The sequence is that of Spermatogenesis-associated protein 22 from Homo sapiens (Human).